A 305-amino-acid chain; its full sequence is Thioredoxin reductase (305 aa).

Residue Leu28–Gln35 coordinates FAD. Cys129 and Cys132 form a disulfide bridge. FAD is bound at residue Asp272 to Ala281.

This sequence belongs to the class-II pyridine nucleotide-disulfide oxidoreductase family. In terms of assembly, homodimer. Requires FAD as cofactor.

Its subcellular location is the cytoplasm. The enzyme catalyses [thioredoxin]-dithiol + NADP(+) = [thioredoxin]-disulfide + NADPH + H(+). This chain is Thioredoxin reductase (TRXB), found in Spironucleus barkhanus.